A 129-amino-acid polypeptide reads, in one-letter code: Small ribosomal subunit protein uS11 (129 aa).

It belongs to the universal ribosomal protein uS11 family. In terms of assembly, part of the 30S ribosomal subunit. Interacts with proteins S7 and S18. Binds to IF-3.

Located on the platform of the 30S subunit, it bridges several disparate RNA helices of the 16S rRNA. Forms part of the Shine-Dalgarno cleft in the 70S ribosome. The sequence is that of Small ribosomal subunit protein uS11 from Parabacteroides distasonis (strain ATCC 8503 / DSM 20701 / CIP 104284 / JCM 5825 / NCTC 11152).